The following is a 456-amino-acid chain: MNKFQGPVTLKDVIVEFTKEEWKLLTPAQRTLYKDVMLENYSHLVSVGYHVNKPNAVFKLKQGKEPWILEVEFPHRGFPEDLWSIHDLEARYQESQAGNSRNGELTKHQKTHTTEKACECKECGKFFCQKSALIVHQHTHSKGKSYDCDKCGKSFSKNEDLIRHQKIHTRDKTYECKECKKIFYHLSSLSRHLRTHAGEKPYECNQCEKSFYQKPHLTEHQKTHTGEKPFECTECGKFFYVKAYLMVHQKTHTGEKPYECKECGKAFSQKSHLTVHQRMHTGEKPYKCKECGKFFSRNSHLKTHQRSHTGEKPYECKECRKCFYQKSALTVHQRTHTGEKPFECNKCGKTFYYKSDLTKHQRKHTGEKPYECTECGKSFAVNSVLRLHQRTHTGEKPYACKECGKSFSQKSHFIIHQRKHTGEKPYECQECGETFIQKSQLTAHQKTHTKKRNAEK.

The region spanning 8–79 (VTLKDVIVEF…EVEFPHRGFP (72 aa)) is the KRAB domain. C2H2-type zinc fingers lie at residues 118 to 140 (CECK…QHTH), 146 to 168 (YDCD…QKIH), 174 to 196 (YECK…LRTH), 202 to 224 (YECN…QKTH), 230 to 252 (FECT…QKTH), 258 to 280 (YECK…QRMH), 286 to 308 (YKCK…QRSH), 314 to 336 (YECK…QRTH), 342 to 364 (FECN…QRKH), 370 to 392 (YECT…QRTH), 398 to 420 (YACK…QRKH), and 426 to 448 (YECQ…QKTH).

Belongs to the krueppel C2H2-type zinc-finger protein family.

It localises to the nucleus. In terms of biological role, may be involved in transcriptional regulation. The sequence is that of Zinc finger protein 25 (ZNF25) from Homo sapiens (Human).